The chain runs to 115 residues: Large ribosomal subunit protein bL20 (115 aa).

This sequence belongs to the bacterial ribosomal protein bL20 family.

Its function is as follows. Binds directly to 23S ribosomal RNA and is necessary for the in vitro assembly process of the 50S ribosomal subunit. It is not involved in the protein synthesizing functions of that subunit. The sequence is that of Large ribosomal subunit protein bL20 from Chlorobium phaeobacteroides (strain DSM 266 / SMG 266 / 2430).